The following is a 38-amino-acid chain: Photosystem II reaction center protein Y (38 aa).

A helical membrane pass occupies residues 5 to 23 (VVVVLAPVIIAGSWAIFNI).

It belongs to the PsbY family. PSII is composed of 1 copy each of membrane proteins PsbA, PsbB, PsbC, PsbD, PsbE, PsbF, PsbH, PsbI, PsbJ, PsbK, PsbL, PsbM, PsbT, PsbX, PsbY, PsbZ, Psb30/Ycf12, peripheral proteins PsbO, CyanoQ (PsbQ), PsbU, PsbV and a large number of cofactors. It forms dimeric complexes.

It is found in the cellular thylakoid membrane. Functionally, loosely associated component of the core of photosystem II (PSII), it is not always seen in crystals. PSII is a light-driven water plastoquinone oxidoreductase, using light energy to abstract electrons from H(2)O, generating a proton gradient subsequently used for ATP formation. This Picosynechococcus sp. (strain ATCC 27264 / PCC 7002 / PR-6) (Agmenellum quadruplicatum) protein is Photosystem II reaction center protein Y.